The chain runs to 154 residues: Keratin-associated protein 9-9 (154 aa).

14 repeat units span residues Cys8–Thr12, Cys13–Thr17, Cys18–Thr22, Cys37–Ser41, Cys42–Ser46, Cys51–Ala55, Cys56–Thr60, Cys61–Thr65, Cys66–Thr70, Cys75–Thr79, Cys124–Ala128, Cys129–Thr133, Cys134–Thr137, and Cys148–Ser152. Residues Cys8–Ser152 are 14 X 5 AA repeats of C-C-[RQVGE]-[SPSTNQ]-[TASL].

The protein belongs to the KRTAP type 9 family. In terms of assembly, interacts with hair keratins.

In terms of biological role, in the hair cortex, hair keratin intermediate filaments are embedded in an interfilamentous matrix, consisting of hair keratin-associated proteins (KRTAP), which are essential for the formation of a rigid and resistant hair shaft through their extensive disulfide bond cross-linking with abundant cysteine residues of hair keratins. The matrix proteins include the high-sulfur and high-glycine-tyrosine keratins. This is Keratin-associated protein 9-9 (KRTAP9-9) from Homo sapiens (Human).